A 208-amino-acid polypeptide reads, in one-letter code: MAKKAKYPDVPIRFSETFSDTNLYIVLLIGVPLYGVITSYLFNREYAESTLKNLLTIPVSRISLIVSKLVLLLIWIMMLTLIAWVLTLLFGLIGQFEGLSSAVLIEGFKQFMIGGALLFFLVSPIIFVTLLFKNYVPTIIFTIIISMVSIMVYGTEYSALFPWSAVWVIASGTFFPEYPPEYSFISVAATTVLGLAATIVYFKKIDIH.

Transmembrane regions (helical) follow at residues L23–N43, V70–F90, F111–L131, Y135–T155, A159–P179, and Y182–F202.

It is found in the cell membrane. Part of the binding-protein-dependent transport system for bacitracin that confer resistance to this antibiotic; probably responsible for the translocation of the substrate across the membrane. In Bacillus licheniformis, this protein is Bacitracin transport permease protein BCRB (bcrB).